The following is a 558-amino-acid chain: 2-isopropylmalate synthase (558 aa).

The 275-residue stretch at 31-305 folds into the Pyruvate carboxyltransferase domain; it reads PRWCSTDLRD…YPNLDFSDMR (275 aa). 4 residues coordinate Mg(2+): aspartate 40, histidine 244, histidine 246, and asparagine 280. The regulatory domain stretch occupies residues 439-558; that stretch reads NPDDKGQMKL…NACHPLYKEA (120 aa).

Belongs to the alpha-IPM synthase/homocitrate synthase family. LeuA type 2 subfamily. Homodimer. Mg(2+) is required as a cofactor.

The protein localises to the cytoplasm. It catalyses the reaction 3-methyl-2-oxobutanoate + acetyl-CoA + H2O = (2S)-2-isopropylmalate + CoA + H(+). It functions in the pathway amino-acid biosynthesis; L-leucine biosynthesis; L-leucine from 3-methyl-2-oxobutanoate: step 1/4. Functionally, catalyzes the condensation of the acetyl group of acetyl-CoA with 3-methyl-2-oxobutanoate (2-ketoisovalerate) to form 3-carboxy-3-hydroxy-4-methylpentanoate (2-isopropylmalate). This is 2-isopropylmalate synthase from Marinomonas sp. (strain MWYL1).